Consider the following 548-residue polypeptide: Biotin-dependent acetyl-/propionyl-coenzyme A carboxylase beta5 subunit (548 aa).

The tract at residues 1–23 is disordered; it reads MTSVTDRSAHSAERSTEHTIDIH. A compositionally biased stretch (basic and acidic residues) spans 7–21; sequence RSAHSAERSTEHTID. In terms of domain architecture, CoA carboxyltransferase N-terminal spans 25–281; the sequence is TAGKLAELHK…NNSTDAPRYQ (257 aa). The CoA carboxyltransferase C-terminal domain occupies 295–541; the sequence is DEDLELDTLI…ERKIAQLPPK (247 aa).

It belongs to the AccD/PCCB family. As to quaternary structure, the biotin-dependent acyl-CoA carboxylase complex is composed of AccA3, which contains the biotin carboxylase (BC) and biotin carboxyl carrier protein (BCCP) domains, and AccD5, which contains the carboxyl transferase (CT) domain.

The catalysed reaction is N(6)-carboxybiotinyl-L-lysyl-[protein] + acetyl-CoA = N(6)-biotinyl-L-lysyl-[protein] + malonyl-CoA. It catalyses the reaction N(6)-carboxybiotinyl-L-lysyl-[protein] + propanoyl-CoA = methylmalonyl-CoA + N(6)-biotinyl-L-lysyl-[protein]. It functions in the pathway lipid metabolism; mycolic acid biosynthesis. Its function is as follows. Component of a biotin-dependent acyl-CoA carboxylase complex. This subunit transfers the CO2 from carboxybiotin to the CoA ester substrate. When associated with the alpha3 subunit AccA3, is involved in the carboxylation of acetyl-CoA and propionyl-CoA. The protein is Biotin-dependent acetyl-/propionyl-coenzyme A carboxylase beta5 subunit (accD5) of Mycobacterium tuberculosis (strain CDC 1551 / Oshkosh).